The following is a 188-amino-acid chain: Calcium load-activated calcium channel (188 aa).

The Lumenal segment spans residues 1-4 (MSTM). A helical transmembrane segment spans residues 5–32 (FADTILIVFISICTALLAEGITWVLVYR). Residues 32–89 (RTDKYKRLKAEVEKQSKKLEKKKETITESAGRQQKKKIERQEEKLKNNNRDLSMVRMK) adopt a coiled-coil conformation. At 33–86 (TDKYKRLKAEVEKQSKKLEKKKETITESAGRQQKKKIERQEEKLKNNNRDLSMV) the chain is on the cytoplasmic side. A helical membrane pass occupies residues 87-106 (RMKSMFAIGFCFTALMGMFN). The Lumenal segment spans residues 107–120 (SIFDGRVVAKLPFV). The stretch at 121–130 (PLSYIQGLSH) is an intramembrane region. Over 131–140 (RNLLGEDYTD) the chain is Lumenal. The chain crosses the membrane as a helical span at residues 141-162 (CSFIFLYILCTMSIRQNIQKML). Over 163 to 188 (GLAPSRAATKQAGGFLGPPPQAAKFS) the chain is Cytoplasmic.

The protein belongs to the TMCO1 family. Homodimer and homotetramer. Component of the multi-pass translocon (MPT) complex.

Its subcellular location is the endoplasmic reticulum membrane. The protein resides in the golgi apparatus membrane. Functionally, calcium-selective channel required to prevent calcium stores from overfilling, thereby playing a key role in calcium homeostasis. In response to endoplasmic reticulum (ER) overloading, assembles into a homotetramer, forming a functional calcium-selective channel, regulating the calcium content in endoplasmic reticulum store. Component of the multi-pass translocon (MPT) complex that mediates insertion of multi-pass membrane proteins into the lipid bilayer of membranes. The protein is Calcium load-activated calcium channel of Danio rerio (Zebrafish).